A 750-amino-acid chain; its full sequence is 5-methyltetrahydropteroyltriglutamate--homocysteine methyltransferase (750 aa).

5-methyltetrahydropteroyltri-L-glutamate contacts are provided by residues 15-18 (RELK) and Lys114. L-homocysteine-binding positions include 425 to 427 (IGS) and Glu478. L-methionine contacts are provided by residues 425-427 (IGS) and Glu478. Residue Trp555 participates in 5-methyltetrahydropteroyltri-L-glutamate binding. An L-homocysteine-binding site is contributed by Asp593. Asp593 provides a ligand contact to L-methionine. Residue Glu599 coordinates 5-methyltetrahydropteroyltri-L-glutamate. Residues His636, Cys638, and Glu660 each coordinate Zn(2+). The active-site Proton donor is His689. Cys721 is a Zn(2+) binding site.

This sequence belongs to the vitamin-B12 independent methionine synthase family. Zn(2+) is required as a cofactor.

The enzyme catalyses 5-methyltetrahydropteroyltri-L-glutamate + L-homocysteine = tetrahydropteroyltri-L-glutamate + L-methionine. Its pathway is amino-acid biosynthesis; L-methionine biosynthesis via de novo pathway; L-methionine from L-homocysteine (MetE route): step 1/1. Functionally, catalyzes the transfer of a methyl group from 5-methyltetrahydrofolate to homocysteine resulting in methionine formation. The polypeptide is 5-methyltetrahydropteroyltriglutamate--homocysteine methyltransferase (Streptococcus sanguinis (strain SK36)).